The primary structure comprises 100 residues: Urease subunit gamma (100 aa).

This sequence belongs to the urease gamma subunit family. As to quaternary structure, heterotrimer of UreA (gamma), UreB (beta) and UreC (alpha) subunits. Three heterotrimers associate to form the active enzyme.

It localises to the cytoplasm. It catalyses the reaction urea + 2 H2O + H(+) = hydrogencarbonate + 2 NH4(+). The protein operates within nitrogen metabolism; urea degradation; CO(2) and NH(3) from urea (urease route): step 1/1. This chain is Urease subunit gamma, found in Rhodococcus opacus (strain B4).